The chain runs to 132 residues: MTMTDPLGDMLTRIRNGASRRKSSVSTPASKLRARVLDVLQSEGYIRGYSVVDFGNGKSELSIELKYYEGASVIREIGRVSKPGRRVYVSVKSIPQVANGLGITILSTPKGVMADHQAREQNVGGEVLCSVF.

It belongs to the universal ribosomal protein uS8 family. In terms of assembly, part of the 30S ribosomal subunit. Contacts proteins S5 and S12.

In terms of biological role, one of the primary rRNA binding proteins, it binds directly to 16S rRNA central domain where it helps coordinate assembly of the platform of the 30S subunit. The chain is Small ribosomal subunit protein uS8 from Rhizobium johnstonii (strain DSM 114642 / LMG 32736 / 3841) (Rhizobium leguminosarum bv. viciae).